Reading from the N-terminus, the 177-residue chain is UPF0316 protein STH2077 (177 aa).

2 helical membrane-spanning segments follow: residues 9–29 (AALD…VNTV) and 41–61 (LASA…GLVV).

This sequence belongs to the UPF0316 family.

It is found in the cell membrane. The chain is UPF0316 protein STH2077 from Symbiobacterium thermophilum (strain DSM 24528 / JCM 14929 / IAM 14863 / T).